A 359-amino-acid chain; its full sequence is MISKLSVNPTFSPSYNIIVDSVLDFSHILEYVTNKQVLVVTNTTVAKLYLTKFLPALVDDLDVRTCILEDGEQYKSQQSLDKILSTLLENHFTRNSTVLVALGGGVIGDITGFAAAIYQRGIDFIQIPTTLLSQVDSSVGGKTAINHQLGKNMIGAFYQPKVVYTSIEFYKTLPQREYIAGMAEVVKYAFISKDFYLWLDSNRDKILAKDSVTLIEMVKRSCQIKAQVVAMDEKELTGARAILNFGHTFGHAIEKCQNYRGLKHGEAVGVGMAQAIDFSHYLGLISQQQAKDFKDFIVSFGISIDFPNDICQKEFLEAMLLDKKNSNKELKFILIENIGSLSLQKQSKNELEQFLDISR.

Residues 70-75, 105-109, 129-130, Lys142, Lys151, and 169-172 contribute to the NAD(+) site; these read DGEQYK, GVIGD, TT, and FYKT. Positions 184, 247, and 264 each coordinate Zn(2+).

It belongs to the sugar phosphate cyclases superfamily. Dehydroquinate synthase family. Requires Co(2+) as cofactor. Zn(2+) serves as cofactor. NAD(+) is required as a cofactor.

The protein localises to the cytoplasm. The catalysed reaction is 7-phospho-2-dehydro-3-deoxy-D-arabino-heptonate = 3-dehydroquinate + phosphate. Its pathway is metabolic intermediate biosynthesis; chorismate biosynthesis; chorismate from D-erythrose 4-phosphate and phosphoenolpyruvate: step 2/7. Functionally, catalyzes the conversion of 3-deoxy-D-arabino-heptulosonate 7-phosphate (DAHP) to dehydroquinate (DHQ). The polypeptide is 3-dehydroquinate synthase (Francisella tularensis subsp. mediasiatica (strain FSC147)).